Consider the following 52-residue polypeptide: U-scutigerotoxin(01)-Tl1a (52 aa).

Positions 1–25 (MLAKAMSLLMMFLLVLVIGSVMVSA) are cleaved as a signal peptide.

The protein belongs to the scutigerotoxin-01 family. In terms of processing, contains 1 disulfide bond. In terms of tissue distribution, expressed by the venom gland.

It localises to the secreted. The chain is U-scutigerotoxin(01)-Tl1a from Thereuopoda longicornis (Long-legged centipede).